The following is a 188-amino-acid chain: Elongation factor P (188 aa).

Lys-34 carries the N6-(3,6-diaminohexanoyl)-5-hydroxylysine modification.

It belongs to the elongation factor P family. Post-translationally, may be beta-lysylated on the epsilon-amino group of Lys-34 by the combined action of EpmA and EpmB, and then hydroxylated on the C5 position of the same residue by EpmC (if this protein is present). Lysylation is critical for the stimulatory effect of EF-P on peptide-bond formation. The lysylation moiety may extend toward the peptidyltransferase center and stabilize the terminal 3-CCA end of the tRNA. Hydroxylation of the C5 position on Lys-34 may allow additional potential stabilizing hydrogen-bond interactions with the P-tRNA.

It localises to the cytoplasm. It functions in the pathway protein biosynthesis; polypeptide chain elongation. In terms of biological role, involved in peptide bond synthesis. Alleviates ribosome stalling that occurs when 3 or more consecutive Pro residues or the sequence PPG is present in a protein, possibly by augmenting the peptidyl transferase activity of the ribosome. Modification of Lys-34 is required for alleviation. The sequence is that of Elongation factor P from Erwinia tasmaniensis (strain DSM 17950 / CFBP 7177 / CIP 109463 / NCPPB 4357 / Et1/99).